Consider the following 356-residue polypeptide: Mitogen-activated protein kinase PMK11 (356 aa).

One can recognise a Protein kinase domain in the interval 24 to 312; that stretch reads YDIQDVVGEG…VEEALKHPYL (289 aa). ATP is bound by residues 30 to 38 and K53; that span reads VGEGAYGVV.

It belongs to the protein kinase superfamily. CMGC Ser/Thr protein kinase family. MAP kinase subfamily. Mg(2+) serves as cofactor. Post-translationally, phosphorylated by MST7.

The catalysed reaction is L-seryl-[protein] + ATP = O-phospho-L-seryl-[protein] + ADP + H(+). It carries out the reaction L-threonyl-[protein] + ATP = O-phospho-L-threonyl-[protein] + ADP + H(+). Functionally, mitogen-activated protein kinase; part of the MST11-MST7-PMK1 MAP kinase (MAPK) cascade that is essential for appressorium formation, penetration and invasive growth. Central regulator of appressorium development that acts downstream of the cAMP signal. The MST11-MST7-PMK1 MAP kinase cascade transduces signals from the cell surface sensors MDB2 and SHO1 that recognize various surface signals such as surface hydrophobicity, cutin monomers, and rice leaf waxes. Regulates expression of secreted fungal effector proteins implicated of host immune defenses, preventing reactive oxygen species generation and excessive callose deposition at plasmodesmata. Furthermore, controls the hyphal constriction required for fungal growth from one rice cell to the neighboring cell, enabling host tissue colonization and blast disease. Targets downstream of the PMK1-MAPK pathway include transcription factor MST12 and pathogenicity-related genes GAS1 and GAS2, both of which are expressed during appressorium formation, even if regulation of MST12 is not associated with expression of GAS1 or GAS2. In Pyricularia oryzae (strain 70-15 / ATCC MYA-4617 / FGSC 8958) (Rice blast fungus), this protein is Mitogen-activated protein kinase PMK11.